Here is a 203-residue protein sequence, read N- to C-terminus: Small ribosomal subunit protein uS7A (203 aa).

The protein belongs to the universal ribosomal protein uS7 family. Component of the small ribosomal subunit (SSU). Mature yeast ribosomes consist of a small (40S) and a large (60S) subunit. The 40S small subunit contains 1 molecule of ribosomal RNA (18S rRNA) and at least 33 different proteins. The large 60S subunit contains 3 rRNA molecules (25S, 5.8S and 5S rRNA) and at least 46 different proteins.

It is found in the cytoplasm. Its subcellular location is the nucleus. The protein localises to the nucleolus. Component of the ribosome, a large ribonucleoprotein complex responsible for the synthesis of proteins in the cell. The small ribosomal subunit (SSU) binds messenger RNAs (mRNAs) and translates the encoded message by selecting cognate aminoacyl-transfer RNA (tRNA) molecules. The large subunit (LSU) contains the ribosomal catalytic site termed the peptidyl transferase center (PTC), which catalyzes the formation of peptide bonds, thereby polymerizing the amino acids delivered by tRNAs into a polypeptide chain. The nascent polypeptides leave the ribosome through a tunnel in the LSU and interact with protein factors that function in enzymatic processing, targeting, and the membrane insertion of nascent chains at the exit of the ribosomal tunnel. The protein is Small ribosomal subunit protein uS7A (rps5) of Schizosaccharomyces pombe (strain 972 / ATCC 24843) (Fission yeast).